The chain runs to 193 residues: Ion-translocating oxidoreductase complex subunit A (193 aa).

Helical transmembrane passes span I5–L25, F47–L67, L72–L92, L102–F122, I134–I154, and F167–F187.

The protein belongs to the NqrDE/RnfAE family. In terms of assembly, the complex is composed of six subunits: RnfA, RnfB, RnfC, RnfD, RnfE and RnfG.

It is found in the cell inner membrane. In terms of biological role, part of a membrane-bound complex that couples electron transfer with translocation of ions across the membrane. This Buchnera aphidicola subsp. Acyrthosiphon pisum (strain APS) (Acyrthosiphon pisum symbiotic bacterium) protein is Ion-translocating oxidoreductase complex subunit A.